Reading from the N-terminus, the 345-residue chain is Ribosome production factor 1 (345 aa).

2 disordered regions span residues 1–57 and 70–105; these read MAKA…ISEI and WKQQ…PKTI. The span at 87–97 shows a compositional bias: basic and acidic residues; that stretch reads REREALGDKAP. The Brix domain maps to 142 to 325; it reads PKILITTSDR…LRSLQKGTFD (184 aa). The interval 303–320 is RNA-binding; the sequence is VGIQELGPRFTLKLRSLQ.

It is found in the nucleus. Its subcellular location is the nucleolus. Functionally, may be required for ribosome biogenesis. In Rattus norvegicus (Rat), this protein is Ribosome production factor 1 (Rpf1).